Consider the following 697-residue polypeptide: uncharacterized protein (697 aa).

Helical transmembrane passes span 45–65 (LCAV…LALL), 86–106 (TVAA…MGVV), 128–148 (VVVS…GMLA), 198–218 (VLLG…WWAL), and 280–300 (HLAI…ILAG). ABC transporter domains are found at residues 251–473 (VRLD…QPQH) and 477–696 (LELV…AGGM). Residues 285 to 292 (GANGSGKT) and 514 to 521 (GGNGSGKS) each bind ATP. A helical transmembrane segment spans residues 522–542 (TLAWIMAGLTIPTTGACLLDG).

The protein belongs to the ABC transporter superfamily.

The protein localises to the cell membrane. This is an uncharacterized protein from Mycobacterium tuberculosis (strain CDC 1551 / Oshkosh).